The primary structure comprises 502 residues: Glycerol kinase (502 aa).

Threonine 14 lines the ADP pocket. ATP-binding residues include threonine 14, threonine 15, and serine 16. Threonine 14 contributes to the sn-glycerol 3-phosphate binding site. Arginine 18 is an ADP binding site. Arginine 84, glutamate 85, and tyrosine 136 together coordinate sn-glycerol 3-phosphate. The glycerol site is built by arginine 84, glutamate 85, and tyrosine 136. Position 232 is a phosphohistidine; by HPr (histidine 232). Aspartate 246 provides a ligand contact to sn-glycerol 3-phosphate. Residues aspartate 246 and glutamine 247 each coordinate glycerol. 2 residues coordinate ADP: threonine 268 and glycine 311. ATP-binding residues include threonine 268, glycine 311, glutamine 315, and glycine 412. 2 residues coordinate ADP: glycine 412 and asparagine 416.

It belongs to the FGGY kinase family. Homotetramer and homodimer (in equilibrium). The phosphoenolpyruvate-dependent sugar phosphotransferase system (PTS), including enzyme I, and histidine-containing protein (HPr) are required for the phosphorylation, which leads to the activation of the enzyme.

The catalysed reaction is glycerol + ATP = sn-glycerol 3-phosphate + ADP + H(+). It functions in the pathway polyol metabolism; glycerol degradation via glycerol kinase pathway; sn-glycerol 3-phosphate from glycerol: step 1/1. Activated by phosphorylation and inhibited by fructose 1,6-bisphosphate (FBP). In terms of biological role, key enzyme in the regulation of glycerol uptake and metabolism. Catalyzes the phosphorylation of glycerol to yield sn-glycerol 3-phosphate. The chain is Glycerol kinase from Streptococcus pneumoniae serotype 2 (strain D39 / NCTC 7466).